A 286-amino-acid chain; its full sequence is Mycolic acid methyltransferase MmaA1 (286 aa).

S-adenosyl-L-methionine contacts are provided by residues 32–33, 71–73, 93–98, and 122–123; these read YT, GCG, TLSRNH, and WE. Residue C268 is part of the active site.

Belongs to the CFA/CMAS family.

It participates in lipid metabolism; mycolic acid biosynthesis. Involved in the conversion of a cis-olefin into a trans-olefin with concomitant introduction of an allylic methyl branch at the proximal position of the precursor to both the methoxy and ketomycolic acids. It directly affects the cis- to trans ratio and indirectly affects the keto to methoxy ratio. The chain is Mycolic acid methyltransferase MmaA1 (cmaD) from Mycobacterium bovis (strain ATCC BAA-935 / AF2122/97).